The sequence spans 812 residues: Chromosome alignment-maintaining phosphoprotein 1 (812 aa).

M1 is subject to N-acetylmethionine. The span at 86–105 shows a compositional bias: basic and acidic residues; that stretch reads ASPDKWNDKPKNQLNKETDP. Disordered stretches follow at residues 86 to 124 and 136 to 546; these read ASPD…SAEP and KLGS…PEAR. A phosphoserine mark is found at S87, S108, S173, S184, S204, S214, and S217. The span at 202-213 shows a compositional bias: pro residues; sequence VPSPEPQKPAPV. Polar residues predominate over residues 220–233; sequence ATLSNPKPQKQSHF. S244, S247, S253, S264, S275, S282, S286, S297, S308, S319, S344, S355, S376, S382, and S386 each carry phosphoserine. The mediates interaction with MAD2L2 stretch occupies residues 271–490; it reads ARTTSPEPRK…KSSFFIEPQK (220 aa). Residues 284–297 are compositionally biased toward pro residues; sequence SESPEPWKPFPAVS. The segment covering 336-361 has biased composition (pro residues); that stretch reads PAKPAPSVSPGPWKPIPSVSPGPWKP. Low complexity predominate over residues 363–392; sequence PSVSSASWKSSSVSPSSWKSPPASPESWKS. T403 carries the phosphothreonine modification. A phosphoserine mark is found at S405, S416, S427, S432, S436, S443, S445, and S452. Positions 451–590 are mediates localization to the spindle and the kinetochore and is required for the attachment of spindle microtubules to the kinetochore; sequence LSPDQRKTSP…ELQIDAIDDQ (140 aa). T458 carries the post-translational modification Phosphothreonine. 4 positions are modified to phosphoserine: S459, S462, S472, and S476. K490 carries the post-translational modification N6-acetyllysine; alternate. Residue K490 forms a Glycyl lysine isopeptide (Lys-Gly) (interchain with G-Cter in SUMO2); alternate linkage. The segment covering 499–512 has biased composition (low complexity); sequence PGPSGPSESPKAAS. S507, S512, and S542 each carry phosphoserine. A Glycyl lysine isopeptide (Lys-Gly) (interchain with G-Cter in SUMO2) cross-link involves residue K565. Phosphoserine is present on residues S572 and S603. The interval 591-812 is mediates localization to the chromosome and the spindle and negatively regulates chromosome alignment; sequence KCDILVQEEL…LEPPLEEQQI (222 aa). A Glycyl lysine isopeptide (Lys-Gly) (interchain with G-Cter in SUMO2) cross-link involves residue K606. A phosphoserine mark is found at S615, S626, S627, and S632. Residue K638 forms a Glycyl lysine isopeptide (Lys-Gly) (interchain with G-Cter in SUMO2) linkage. Residues S651, S652, and S653 each carry the phosphoserine modification. Residue K670 forms a Glycyl lysine isopeptide (Lys-Gly) (interchain with G-Cter in SUMO2) linkage. Phosphoserine is present on S675. K689 is covalently cross-linked (Glycyl lysine isopeptide (Lys-Gly) (interchain with G-Cter in SUMO2)). A Phosphoserine modification is found at S736. The C2H2-type zinc-finger motif lies at 738–760; sequence YKCTICGKAFLLESLLKNHVAAH.

Interacts with MAD2L2. Interacts with POGZ, CBX1, CBX3 and CBX5. Post-translationally, phosphorylated by CDK1. Mitotic phosphorylation is required for the attachment of spindle microtubules to the kinetochore.

It is found in the nucleus. Its subcellular location is the chromosome. The protein localises to the centromere. The protein resides in the kinetochore. It localises to the cytoplasm. It is found in the cytoskeleton. Its subcellular location is the spindle. Required for proper alignment of chromosomes at metaphase and their accurate segregation during mitosis. Involved in the maintenance of spindle microtubules attachment to the kinetochore during sister chromatid biorientation. May recruit CENPE and CENPF to the kinetochore. The polypeptide is Chromosome alignment-maintaining phosphoprotein 1 (CHAMP1) (Homo sapiens (Human)).